The sequence spans 195 residues: Imidazoleglycerol-phosphate dehydratase (195 aa).

The protein belongs to the imidazoleglycerol-phosphate dehydratase family.

It localises to the cytoplasm. The catalysed reaction is D-erythro-1-(imidazol-4-yl)glycerol 3-phosphate = 3-(imidazol-4-yl)-2-oxopropyl phosphate + H2O. Its pathway is amino-acid biosynthesis; L-histidine biosynthesis; L-histidine from 5-phospho-alpha-D-ribose 1-diphosphate: step 6/9. This is Imidazoleglycerol-phosphate dehydratase from Geobacter sulfurreducens (strain ATCC 51573 / DSM 12127 / PCA).